Reading from the N-terminus, the 403-residue chain is Endophilin-B2 (403 aa).

The interval 1–27 (MDFNVKKLASDAGVFFSRAMQFTEEKL) is membrane-binding amphipathic helix. In terms of domain architecture, BAR spans 24-287 (EEKLGQAEKT…LGRFSGTFVG (264 aa)). The stretch at 210 to 233 (WSDEVEKAEHELRLTQTEFDRQAE) forms a coiled coil. The 61-residue stretch at 343–403 (SGTRKARVLY…VPVTYLELLS (61 aa)) folds into the SH3 domain.

It belongs to the endophilin family. Homodimer, and heterodimer with SH3GLB1.

It is found in the cytoplasm. The chain is Endophilin-B2 from Gallus gallus (Chicken).